The following is an 82-amino-acid chain: Small ribosomal subunit protein uS15 (82 aa).

The protein belongs to the universal ribosomal protein uS15 family. In terms of assembly, part of the 30S ribosomal subunit. Forms a bridge to the 50S subunit in the 70S ribosome, contacting the 23S rRNA.

Its function is as follows. One of the primary rRNA binding proteins, it binds directly to 16S rRNA where it helps nucleate assembly of the platform of the 30S subunit by binding and bridging several RNA helices of the 16S rRNA. In terms of biological role, forms an intersubunit bridge (bridge B4) with the 23S rRNA of the 50S subunit in the ribosome. The sequence is that of Small ribosomal subunit protein uS15 from Pelagibacter ubique (strain HTCC1062).